The primary structure comprises 383 residues: Neuropeptide Y receptor type 1 (383 aa).

At 1-34 the chain is on the extracellular side; it reads MNSTSFSQLENHSVHYNLSEEKPSFFAFENDDCH. N-linked (GlcNAc...) asparagine glycosylation is found at Asn2, Asn11, and Asn17. Residues 35–55 form a helical membrane-spanning segment; it reads LPLAVIFTLALAYGAVIILGV. At 56–87 the chain is on the cytoplasmic side; that stretch reads SGNLALILIILKQKEMRNVTNILIVNLSFSDL. The helical transmembrane segment at 88 to 108 threads the bilayer; sequence LVAIMCLPFTFVYTLMDHWIF. Residues 109–116 are Extracellular-facing; sequence GEIMCKLN. Cys113 and Cys198 are oxidised to a cystine. The chain crosses the membrane as a helical span at residues 117–137; that stretch reads PFVQCVSITVSIFSLVLIAVE. Residues 138-154 are Cytoplasmic-facing; sequence RHQLIINPRGWRPNNRH. A helical membrane pass occupies residues 155–175; that stretch reads AYIGIAVIWVLAVASSLPFMI. Residues 176 to 211 are Extracellular-facing; the sequence is YQVLTDEPFQNVTLDAFKDKLVCFDQFPSDSHRLSY. Residues 212–232 traverse the membrane as a helical segment; that stretch reads TTLLLVLQYFGPLCFIFICYF. Topologically, residues 233–260 are cytoplasmic; it reads KIYIRLKRRNNMMDKMRDSKYRSSESKR. Residues 261–281 form a helical membrane-spanning segment; the sequence is INIMLLSIVVAFAVCWLPLTI. The Extracellular portion of the chain corresponds to 282 to 299; it reads FNTVFDWNHQIIATCNHN. A helical membrane pass occupies residues 300–320; that stretch reads LLFLLCHLTAMISTCVNPIFY. Residues 321–383 lie on the Cytoplasmic side of the membrane; that stretch reads GFLNKNFQRD…KISCVENEKI (63 aa). A lipid anchor (S-palmitoyl cysteine) is attached at Cys338. Phosphoserine occurs at positions 368 and 376.

Belongs to the G-protein coupled receptor 1 family.

It localises to the cell membrane. Receptor for neuropeptide Y and peptide YY. This chain is Neuropeptide Y receptor type 1 (NPY1R), found in Cavia porcellus (Guinea pig).